The following is a 268-amino-acid chain: MERYESLFIRLKERHEGAFVPFVTLGDPGIEQSLKIIDTLIEAGADALELGIPFSDPLADGPTIQNATLRAFAAGVTPAQCFEMLALIRQKHPTIPIGLLMYANLVFNKGVDEFYAQCEKVGVDSVLVADVPVEESAPFRQAALRHNVAPIFICPPNADDDLLRQIASYGRGYTYLLSRAGVTGAENRAALPLNHLVTKLKEYNAAPPLQGFGISAPDQVKAAIDAGAAGAISGSAIVKIIEQHINEPEKMLAALKAFVQPMKAATRS.

Active-site proton acceptor residues include glutamate 49 and aspartate 60.

This sequence belongs to the TrpA family. As to quaternary structure, tetramer of two alpha and two beta chains.

The catalysed reaction is (1S,2R)-1-C-(indol-3-yl)glycerol 3-phosphate + L-serine = D-glyceraldehyde 3-phosphate + L-tryptophan + H2O. Its pathway is amino-acid biosynthesis; L-tryptophan biosynthesis; L-tryptophan from chorismate: step 5/5. Its function is as follows. The alpha subunit is responsible for the aldol cleavage of indoleglycerol phosphate to indole and glyceraldehyde 3-phosphate. This Escherichia coli O7:K1 (strain IAI39 / ExPEC) protein is Tryptophan synthase alpha chain.